The following is a 196-amino-acid chain: uncharacterized protein (196 aa).

The protein to H.influenzae HI_0431.

This is an uncharacterized protein from Escherichia coli (strain K12).